We begin with the raw amino-acid sequence, 235 residues long: Photosystem I assembly protein Ycf4 (235 aa).

A run of 2 helical transmembrane segments spans residues asparagine 21–tyrosine 43 and glycine 63–leucine 85.

Belongs to the Ycf4 family.

It localises to the plastid. The protein resides in the chloroplast thylakoid membrane. Seems to be required for the assembly of the photosystem I complex. The sequence is that of Photosystem I assembly protein Ycf4 from Amborella trichopoda.